Consider the following 2166-residue polypeptide: Protein TIC236, chloroplastic (2166 aa).

The N-terminal 37 residues, 1 to 37, are a transit peptide targeting the chloroplast; the sequence is MSLRLQNPFLSTPLLHGSFNRREKRINVARRAFRSKR. The Stromal portion of the chain corresponds to 38-101; it reads IYSEKKQNDW…RSLAPVWEEG (64 aa). A helical transmembrane segment spans residues 102 to 122; that stretch reads LFFLRCSVFFAVISGVCLLVW. Topologically, residues 123-2166 are chloroplast intermembrane; that stretch reads YGQNKARVFV…LFEYSATSQD (2044 aa). Residues 1611–1649 form a disordered region; that stretch reads MSEGEVSETDRGGAVKIPSWAKEKEDDEKRTSRDRSEER. The segment covering 1631–1649 has biased composition (basic and acidic residues); the sequence is AKEKEDDEKRTSRDRSEER.

This sequence belongs to the TamB family. In terms of assembly, part of the TIC complex, which can interact with components of the TOC complex to form a larger import complex. Interacts with the TOC complex component TOC75-3.

The protein resides in the plastid. It is found in the chloroplast inner membrane. The protein localises to the chloroplast intermembrane space. Functionally, part of the inner chloroplast membrane translocon complex (TIC) which associates with the outer chloroplast membrane translocon complex (TOC) and forms a supercomplex involved in protein precursor import into the chloroplast stroma. Required for the import of HSP93, TIC40 and RBCS protein precursors in the chloroplast stroma. Links the outer and inner membrane translocons of the chloroplast envelope. The protein is Protein TIC236, chloroplastic of Arabidopsis thaliana (Mouse-ear cress).